The chain runs to 342 residues: Uroporphyrinogen decarboxylase (342 aa).

Substrate is bound by residues 21–25 (RQAGR), Asp71, Tyr148, Ser203, and His316.

The protein belongs to the uroporphyrinogen decarboxylase family. In terms of assembly, homodimer.

It localises to the cytoplasm. The catalysed reaction is uroporphyrinogen III + 4 H(+) = coproporphyrinogen III + 4 CO2. It functions in the pathway porphyrin-containing compound metabolism; protoporphyrin-IX biosynthesis; coproporphyrinogen-III from 5-aminolevulinate: step 4/4. Its function is as follows. Catalyzes the decarboxylation of four acetate groups of uroporphyrinogen-III to yield coproporphyrinogen-III. The sequence is that of Uroporphyrinogen decarboxylase from Campylobacter curvus (strain 525.92).